Reading from the N-terminus, the 431-residue chain is MQNIHFIGIGGIGISALARFLKEKGFKISGSDLKESKITKELEKEGVKVSIPHHKDNILNKDLVIYSAAIKEENPEFKYAKELGIKCLSRKEALPLILEDKRVFAVAGAHGKSTTSSILASLLDDASVIIGAILKEFGSNMIYKESQNLVFEADESDSSFLNSNPYLAIVTNAEAEHLDHYGNEVSKLHHAYTQFLDVAKIRVINAEDEFLKNYKNESIKLYPSKDIKNCTMCIENFKPFTSFELKDLGEFKVFGMGYHLALDASLAILAALNFLDIETIRTRLKNYQGIKKRFDILHADENLVLIDDYGHHPTEIKATLSAAQEYVKLGGYKKITAIFEPHRYTRLATNLKEFAKAFEGVDELVILPVYAAGEEPIELDLKAVFPKALFVEDIKREGKFLVASKGQVFEEGLIIGFGAGDISNKLRQKNE.

Position 108–114 (108–114) interacts with ATP; sequence GAHGKST.

Belongs to the MurCDEF family.

The protein resides in the cytoplasm. The enzyme catalyses UDP-N-acetyl-alpha-D-muramate + L-alanine + ATP = UDP-N-acetyl-alpha-D-muramoyl-L-alanine + ADP + phosphate + H(+). The protein operates within cell wall biogenesis; peptidoglycan biosynthesis. Its function is as follows. Cell wall formation. The polypeptide is UDP-N-acetylmuramate--L-alanine ligase (Campylobacter jejuni subsp. jejuni serotype O:23/36 (strain 81-176)).